The chain runs to 670 residues: Thrombospondin-type laminin G domain and EAR repeat-containing protein (670 aa).

The first 20 residues, 1–20 (MSALLMLCAVLLLLGTPSRG), serve as a signal peptide directing secretion. The region spanning 59–278 (GLQFSATEPR…KVTLGSRPPC (220 aa)) is the Laminin G-like domain. 7 EAR repeats span residues 314–359 (DYVE…KWTD), 361–409 (KFVS…KWSP), 413–461 (KFTL…RWNP), 465–513 (LFEA…IWLV), 515–571 (AFQL…ELNI), 575–623 (TFVK…RWQG), and 626–669 (GFVA…KLRT). An N-linked (GlcNAc...) asparagine glycan is attached at asparagine 498.

As to expression, in the organ of Corti, expression at postnatal day 1 (P1) is restricted to the basal region of the stereocilia of inner and outer hair cells (at protein level). Expressed in the organ of Corti at P1 and P7, in cochlear ganglion, stria vascularis and vestibular ends at P7, and in inferior colliculus, remaining brainstem, cerebellum, brain hemispheres and retina at P1, P7 and in the adult. Also detected in adult liver, lung, kidney, intestine and testis but not in heart or skeletal muscle.

Its subcellular location is the secreted. The protein resides in the cell surface. The protein localises to the cell projection. It localises to the stereocilium. Functionally, plays a critical role in tooth and hair follicle morphogenesis through regulation of the Notch signaling pathway. May play a role in development or function of the auditory system. The sequence is that of Thrombospondin-type laminin G domain and EAR repeat-containing protein from Mus musculus (Mouse).